A 195-amino-acid chain; its full sequence is Probable GTP-binding protein EngB (195 aa).

In terms of domain architecture, EngB-type G spans 24 to 195; that stretch reads GLTEVALSGR…EIWNFIETYI (172 aa). GTP is bound by residues 32-39, 59-63, 77-80, 144-147, and 176-178; these read GRSNVGKS, GKTQT, DVPG, TKED, and YSS. Residues serine 39 and threonine 61 each coordinate Mg(2+).

It belongs to the TRAFAC class TrmE-Era-EngA-EngB-Septin-like GTPase superfamily. EngB GTPase family. Mg(2+) serves as cofactor.

Its function is as follows. Necessary for normal cell division and for the maintenance of normal septation. The polypeptide is Probable GTP-binding protein EngB (Staphylococcus epidermidis (strain ATCC 35984 / DSM 28319 / BCRC 17069 / CCUG 31568 / BM 3577 / RP62A)).